A 461-amino-acid chain; its full sequence is Deoxyhypusine synthase (461 aa).

Residues 166–167 (EH), Glu331, His377, 403–405 (GSD), and 412–418 (EAVSWGK) contribute to the spermidine site. Lys418 (nucleophile) is an active-site residue. The chain crosses the membrane as a helical span at residues 428 to 448 (VYSEVTIVFPLIVVHVFVAWV).

The protein belongs to the deoxyhypusine synthase family. Heterotetramer formed by a homodimer of the non-catalytic regulatory subunit DHSp and a homodimer of the catalytic subunit DHSc where DHSc appears to bind spermidine and DHSp appears to bind NAD(+). NAD(+) serves as cofactor.

The protein resides in the membrane. The enzyme catalyses [eIF5A protein]-L-lysine + spermidine = [eIF5A protein]-deoxyhypusine + propane-1,3-diamine. Its pathway is protein modification; eIF5A hypusination. Its activity is regulated as follows. Allosterically activated by DHSp. Inhibited by spermididine analog N1-guanyl-1,7-diamineoheptane (GC7). Its function is as follows. In association with the non-catalytic regulatory subunit DHSp, catalyzes the NAD-dependent oxidative cleavage of spermidine and the subsequent transfer of the butylamine moiety of spermidine to the epsilon-amino group of a specific lysine residue of the eIF5A precursor protein to form the intermediate deoxyhypusine residue. Regulates protein levels of its regulatory subunit DHSp. Required for cell growth and survival. The chain is Deoxyhypusine synthase from Trypanosoma brucei brucei (strain 927/4 GUTat10.1).